The following is a 601-amino-acid chain: Elongation factor 4 (601 aa).

The region spanning glutamine 6–lysine 188 is the tr-type G domain. GTP is bound by residues aspartate 18–threonine 23 and asparagine 135–aspartate 138.

It belongs to the TRAFAC class translation factor GTPase superfamily. Classic translation factor GTPase family. LepA subfamily.

Its subcellular location is the cell inner membrane. It catalyses the reaction GTP + H2O = GDP + phosphate + H(+). Functionally, required for accurate and efficient protein synthesis under certain stress conditions. May act as a fidelity factor of the translation reaction, by catalyzing a one-codon backward translocation of tRNAs on improperly translocated ribosomes. Back-translocation proceeds from a post-translocation (POST) complex to a pre-translocation (PRE) complex, thus giving elongation factor G a second chance to translocate the tRNAs correctly. Binds to ribosomes in a GTP-dependent manner. In Leptospira borgpetersenii serovar Hardjo-bovis (strain JB197), this protein is Elongation factor 4.